A 340-amino-acid chain; its full sequence is Centromere protein N (340 aa).

Residues Ser-227 and Ser-236 each carry the phosphoserine modification.

It belongs to the CENP-N/CHL4 family. As to quaternary structure, component of the CENPA-NAC complex, at least composed of CENPA, CENPC, CENPH, CENPM, CENPN, CENPT and CENPU. The CENPA-NAC complex interacts with the CENPA-CAD complex, composed of CENPI, CENPK, CENPL, CENPO, CENPP, CENPQ, CENPR and CENPS. Interacts directly with CENPA. Identified in a centromere complex containing histones H2A, H2B and H4, and at least CENPA, CENPB, CENPC, CENPT, CENPN, HJURP, SUPT16H, SSRP1 and RSF1.

It localises to the nucleus. The protein localises to the chromosome. It is found in the centromere. The protein resides in the kinetochore. Component of the CENPA-NAC (nucleosome-associated) complex, a complex that plays a central role in assembly of kinetochore proteins, mitotic progression and chromosome segregation. The CENPA-NAC complex recruits the CENPA-CAD (nucleosome distal) complex and may be involved in incorporation of newly synthesized CENPA into centromeres. CENPN is the first protein to bind specifically to CENPA nucleosomes and the direct binding of CENPA nucleosomes by CENPN is required for centromere assembly. Required for chromosome congression and efficiently align the chromosomes on a metaphase plate. In Rattus norvegicus (Rat), this protein is Centromere protein N (Cenpn).